Consider the following 337-residue polypeptide: Anthranilate phosphoribosyltransferase (337 aa).

5-phospho-alpha-D-ribose 1-diphosphate is bound by residues Gly-81, 84–85, Ser-89, 91–94, 109–117, and Ala-121; these read GD, NVST, and KHGNRALSS. Gly-81 serves as a coordination point for anthranilate. A Mg(2+)-binding site is contributed by Ser-93. Asn-112 is an anthranilate binding site. Arg-167 contacts anthranilate. Asp-226 and Glu-227 together coordinate Mg(2+).

The protein belongs to the anthranilate phosphoribosyltransferase family. Homodimer. Requires Mg(2+) as cofactor.

The catalysed reaction is N-(5-phospho-beta-D-ribosyl)anthranilate + diphosphate = 5-phospho-alpha-D-ribose 1-diphosphate + anthranilate. It participates in amino-acid biosynthesis; L-tryptophan biosynthesis; L-tryptophan from chorismate: step 2/5. Functionally, catalyzes the transfer of the phosphoribosyl group of 5-phosphorylribose-1-pyrophosphate (PRPP) to anthranilate to yield N-(5'-phosphoribosyl)-anthranilate (PRA). This chain is Anthranilate phosphoribosyltransferase, found in Bradyrhizobium sp. (strain BTAi1 / ATCC BAA-1182).